The sequence spans 397 residues: Transcription factor xenB (397 aa).

Positions 220–249 (TISDFETGDRQTISRSDTNSEVRPIPESPS) are disordered. A compositionally biased stretch (polar residues) spans 229–240 (RQTISRSDTNSE).

In terms of biological role, transcription factor; part of the gene cluster that mediates the biosynthesis of xenoacremones such as xenoacremone A, a compound that shows inhibitory activity toward the PI3K/AKT signaling pathway and which has the ability to induce apoptosis of A549 lung cancer cells. Acts as a positive regulator of the xenoacremones biosynthesis gene cluster. The sequence is that of Transcription factor xenB from Xenoacremonium sinensis (Endophyte fungus).